We begin with the raw amino-acid sequence, 430 residues long: Probable folylpolyglutamate synthase (430 aa).

Glycine 37–threonine 40 serves as a coordination point for ATP. Glutamate 132 contributes to the Mg(2+) binding site. Position 300 (aspartate 300) interacts with ATP.

The protein belongs to the folylpolyglutamate synthase family.

The protein localises to the mitochondrion. It carries out the reaction (6S)-5,6,7,8-tetrahydrofolyl-(gamma-L-Glu)(n) + L-glutamate + ATP = (6S)-5,6,7,8-tetrahydrofolyl-(gamma-L-Glu)(n+1) + ADP + phosphate + H(+). It functions in the pathway cofactor biosynthesis; tetrahydrofolylpolyglutamate biosynthesis. In terms of biological role, conversion of folates to polyglutamate derivatives. The sequence is that of Probable folylpolyglutamate synthase (RMA1) from Saccharomyces cerevisiae (strain ATCC 204508 / S288c) (Baker's yeast).